Consider the following 517-residue polypeptide: FAD-dependent monooxygenase FUP4 (517 aa).

The signal sequence occupies residues 1-19 (MRQSSTLTWTSVLLAPLAA). The FAD-binding PCMH-type domain maps to 75–246 (QALRPACLVH…TRFDLDLYDQ (172 aa)). Histidine 112 is subject to Pros-8alpha-FAD histidine. N-linked (GlcNAc...) asparagine glycans are attached at residues asparagine 163, asparagine 208, and asparagine 346.

The protein belongs to the oxygen-dependent FAD-linked oxidoreductase family. Requires FAD as cofactor.

The protein operates within secondary metabolite biosynthesis; terpenoid biosynthesis. FAD-dependent monooxygenase; part of the gene cluster that mediates the biosynthesis of the mycotoxin fusaproliferin (FUP) that belongs to the class of bicyclic sesterterpenoids. FUP4 catalyzes the oxidation of the hydroxy group at the C-16 position of preterpestacin III to a keto group, leading to the formation of (-)-terpestacin. The product of FUP1, preterpestacin I, might also serve as a substrate of FUP4 to yield oxo-preterpestacin I. The FUP biosynthetic pathway starts with the enzyme encoded by FUP1 that combines a C-terminal prenyltransferase domain responsible for the synthesis of geranylgeranyl diphosphate with the N-terminal terpene cyclase domain, to yield preterpestacin I. Preterpestacin I is then decorated by oxygenation steps that are catalyzed by two cytochrome P450 monooxygenases. First, FUP2 introduces a hydroxyl group at the C-24 position resulting in the formation of preterpestacin IIa. The second P450 monooxygenase catalyzes the hydroxylation at C-16 and C-17 of preterpestacin IIa, producing preterpestacin III. Subsequently, the FAD-dependent oxidoreductase FUP4 catalyzes the oxidation of the hydroxy group at the C-16 position to a keto group, leading to the formation of (-)-terpestacin, which is the immediate precursor of FUP. The final step in the proposed biosynthetic pathway is the addition of an acetyl group at the C-24 position of terpestacin, which is catalyzed by the acetyltransferase FUP5. The polypeptide is FAD-dependent monooxygenase FUP4 (Fusarium proliferatum (strain ET1) (Orchid endophyte fungus)).